Here is a 498-residue protein sequence, read N- to C-terminus: Thiamine transporter 1 (498 aa).

Residue Met-1 is modified to N-acetylmethionine. The Cytoplasmic segment spans residues 1–28 (MDVPARVSRRAAAAAARMLLRTARVPRE). The helical transmembrane segment at 29–46 (CWFLPTALLCAYGFFANL) threads the bilayer. Residues 47-71 (RPSEPFLTPYLLGPDKNLTERQVYN) lie on the Extracellular side of the membrane. N-linked (GlcNAc...) asparagine glycosylation is present at Asn-63. Residues 72–92 (EIYPVWTYSYLLLLFPVFLAT) form a helical membrane-spanning segment. Residues 93–105 (DYLRYKPVILLQG) lie on the Cytoplasmic side of the membrane. A helical transmembrane segment spans residues 106–126 (LSLIVTWFMLLYAQGLLAIQF). Residues 127-128 (LE) are Extracellular-facing. The chain crosses the membrane as a helical span at residues 129–149 (FFYGIATATEIAYYSYIYTVV). Residues 150 to 164 (DLGMYQKVTSYCRSA) are Cytoplasmic-facing. A helical transmembrane segment spans residues 165-185 (TLVGFTVGSVLGQILVSVVGW). Position 186 (Ser-186) is a topological domain, extracellular. A helical membrane pass occupies residues 187-207 (LFSLNVISLTCVSVAFAVAWF). Residues 208 to 295 (LPMPQKSLFF…DFLMCYSSRP (88 aa)) lie on the Cytoplasmic side of the membrane. Residue Ser-222 is modified to Phosphoserine. Residues 296–316 (LLCWSVWWALSTCGYFQVVNY) traverse the membrane as a helical segment. Residues 317–334 (AQGLWEKVMPSQNADIYN) are Extracellular-facing. Residues 335-355 (GGVEAVSTLLGASAVFAVGYI) traverse the membrane as a helical segment. At 356–360 (KLSWS) the chain is on the cytoplasmic side. Residues 361–381 (TWGEMTLFLCSLLIAAAVYVM) form a helical membrane-spanning segment. Residues 382-386 (DTVQS) lie on the Extracellular side of the membrane. A helical membrane pass occupies residues 387 to 407 (IWVCYASYVVFRIIYMVLITI). Residues 408–423 (ATFQIAANLSMERYAL) are Cytoplasmic-facing. Residues 424 to 444 (VFGVNTFIALALQTLLTLIVV) form a helical membrane-spanning segment. The Extracellular portion of the chain corresponds to 445–456 (DARGLGLCITTQ). A helical transmembrane segment spans residues 457–477 (FLIYASYFAAISVVFLANGIV). Over 478–498 (SIIKKCRKQEDPSSSPQASTS) the chain is Cytoplasmic.

It belongs to the reduced folate carrier (RFC) transporter (TC 2.A.48) family. In terms of assembly, interacts with TSPAN1; this interaction increases the stability of SLC19A2. Interacts with TMEM63B. Expressed in liver. Expressed in cochlear hair cells and duodenum (at protein level). Detected in pancreatic acinar cells (at protein level). Also expressed strongly in pancreatic islet cells. Expressed in the testis. In terms of tissue distribution, very highly expressed in liver, and also detected at lower levels in heart, testis, kidney, brain and spleen. As to expression, expressed at low levels in liver and spleen.

It localises to the cell membrane. The enzyme catalyses thiamine(out) + H(+)(in) = thiamine(in) + H(+)(out). It catalyses the reaction pyridoxine(out) + n H(+)(out) = pyridoxine(in) + n H(+)(in). High-affinity transporter for the intake of thiamine. Essential for spermatogenesis. Mediates H(+)-dependent pyridoxine transport. This is Thiamine transporter 1 from Mus musculus (Mouse).